A 569-amino-acid polypeptide reads, in one-letter code: Urease subunit alpha (569 aa).

Positions 131-569 (GGMDAHIHFI…LPMAQRYFLF (439 aa)) constitute a Urease domain. Positions 136, 138, and 218 each coordinate Ni(2+). Residue K218 is modified to N6-carboxylysine. Position 220 (H220) interacts with substrate. Ni(2+) is bound by residues H247 and H273. Residue H321 is the Proton donor of the active site. D361 contributes to the Ni(2+) binding site.

It belongs to the metallo-dependent hydrolases superfamily. Urease alpha subunit family. In terms of assembly, heterotrimer of UreA (gamma), UreB (beta) and UreC (alpha) subunits. Three heterotrimers associate to form the active enzyme. Ni cation serves as cofactor. In terms of processing, carboxylation allows a single lysine to coordinate two nickel ions.

Its subcellular location is the cytoplasm. It carries out the reaction urea + 2 H2O + H(+) = hydrogencarbonate + 2 NH4(+). The protein operates within nitrogen metabolism; urea degradation; CO(2) and NH(3) from urea (urease route): step 1/1. The sequence is that of Urease subunit alpha from Rhizobium rhizogenes (strain K84 / ATCC BAA-868) (Agrobacterium radiobacter).